Here is a 212-residue protein sequence, read N- to C-terminus: Ribonuclease HII (212 aa).

Positions 17 to 211 constitute an RNase H type-2 domain; that stretch reads ANLAGIDEAG…VIEALLSLEQ (195 aa). The a divalent metal cation site is built by aspartate 23, glutamate 24, and aspartate 120.

Belongs to the RNase HII family. It depends on Mn(2+) as a cofactor. Mg(2+) serves as cofactor.

It is found in the cytoplasm. The enzyme catalyses Endonucleolytic cleavage to 5'-phosphomonoester.. Functionally, endonuclease that specifically degrades the RNA of RNA-DNA hybrids. In Chloroflexus aurantiacus (strain ATCC 29364 / DSM 637 / Y-400-fl), this protein is Ribonuclease HII.